Consider the following 227-residue polypeptide: Putative ankyrin repeat protein L45 (227 aa).

ANK repeat units follow at residues 38–66 (FETN…NINH), 78–107 (CLEE…NIFH), 108–137 (NENC…DVRA), 139–167 (NDYA…DVRS), 168–197 (CDSY…NYRA), and 199–227 (NHHA…GITK).

The chain is Putative ankyrin repeat protein L45 from Acanthamoeba polyphaga mimivirus (APMV).